Here is a 1236-residue protein sequence, read N- to C-terminus: Complement factor H (1236 aa).

Residues 1 to 18 form the signal peptide; the sequence is MRFPAKIVWLVLWTVCVA. 20 consecutive Sushi domains span residues 19–82, 83–143, 144–207, 208–264, 265–322, 325–383, 385–442, 444–505, 507–562, 565–623, 627–685, 688–745, 750–804, 809–866, 868–936, 937–994, 995–1053, 1054–1111, 1114–1172, and 1173–1235; these read EDCK…ICRK, KPCA…ICEV, VKCL…KCVE, IFCK…TCIE, ITCD…RCAW, CSYP…EEPC, RQCI…RCIR, KTCS…VCIK, CDRP…KAAC, RECS…TCKV, KSCA…VCIE, RTCG…QCIA, RKCK…DCNE, QLCP…RCIE, IGCS…QCVG, LPCG…DCIS, TNCV…ACRD, VSCG…QCKD, GKCG…KCLE, and ACVI…YPRC. Disulfide bonds link cysteine 21–cysteine 66, cysteine 52–cysteine 80, cysteine 85–cysteine 129, cysteine 114–cysteine 141, cysteine 146–cysteine 192, cysteine 178–cysteine 205, cysteine 210–cysteine 251, cysteine 237–cysteine 262, cysteine 267–cysteine 309, cysteine 294–cysteine 320, cysteine 325–cysteine 372, cysteine 355–cysteine 383, cysteine 387–cysteine 429, cysteine 414–cysteine 440, cysteine 446–cysteine 492, cysteine 475–cysteine 503, cysteine 507–cysteine 551, cysteine 534–cysteine 562, cysteine 567–cysteine 609, cysteine 595–cysteine 621, cysteine 629–cysteine 672, cysteine 658–cysteine 683, cysteine 690–cysteine 732, cysteine 718–cysteine 743, cysteine 752–cysteine 791, cysteine 780–cysteine 802, cysteine 811–cysteine 853, cysteine 839–cysteine 864, cysteine 870–cysteine 923, cysteine 909–cysteine 934, cysteine 939–cysteine 981, cysteine 967–cysteine 992, cysteine 997–cysteine 1040, cysteine 1026–cysteine 1051, cysteine 1056–cysteine 1098, cysteine 1084–cysteine 1109, cysteine 1116–cysteine 1159, cysteine 1145–cysteine 1170, cysteine 1174–cysteine 1225, and cysteine 1208–cysteine 1235. Sulfotyrosine occurs at positions 168 and 170. Residues tyrosine 465 and tyrosine 473 each carry the sulfotyrosine modification. Residues tyrosine 575, tyrosine 579, and tyrosine 585 each carry the sulfotyrosine modification. A glycan (N-linked (GlcNAc...) asparagine) is linked at asparagine 775. N-linked (GlcNAc...) asparagine glycosylation is present at asparagine 1100.

Homodimer. Also forms homooligomers. Interacts with complement protein C3b; this interaction inhibits complement activation. Interacts with complement protein C3d. Interacts with CR3/ITGAM; this interaction mediates adhesion of neutrophils to pathogens leading to pathogen clearance. Sulfated on tyrosine residues. CFH is one of the most abundant complement components in blood where the liver is the major source of CFH protein in vivo. in addition, CFH is secreted by additional cell types including monocytes, fibroblasts, or endothelial cells.

The protein localises to the secreted. Functionally, glycoprotein that plays an essential role in maintaining a well-balanced immune response by modulating complement activation. Acts as a soluble inhibitor of complement, where its binding to self markers such as glycan structures prevents complement activation and amplification on cell surfaces. Accelerates the decay of the complement alternative pathway (AP) C3 convertase C3bBb, thus preventing local formation of more C3b, the central player of the complement amplification loop. As a cofactor of the serine protease factor I, CFH also regulates proteolytic degradation of already-deposited C3b. In addition, mediates several cellular responses through interaction with specific receptors. For example, interacts with CR3/ITGAM receptor and thereby mediates the adhesion of human neutrophils to different pathogens. In turn, these pathogens are phagocytosed and destroyed. This Bos taurus (Bovine) protein is Complement factor H (CFH).